The primary structure comprises 501 residues: Dipeptide and tripeptide permease A (501 aa).

The Cytoplasmic segment spans residues 1-21; it reads MSTANKKPTESVSLNAFKQPK. Residues 22–44 form a helical membrane-spanning segment; it reads AFYLIFSIELWERFGYYGLQGIM. Residues 45-59 are Periplasmic-facing; it reads AVYLVKQLGMSEADS. The helical transmembrane segment at 60 to 80 threads the bilayer; the sequence is ITLFSSFSALVYGLVAIGGWL. At 81–89 the chain is on the cytoplasmic side; that stretch reads GDKILGTKR. Residues 90–110 traverse the membrane as a helical segment; sequence VIMLGAVVLAIGYALVAWSGH. A topological domain (periplasmic) is located at residue D111. Residues 112–132 form a helical membrane-spanning segment; the sequence is AGIVYMGMAAIAVGNGLFKAN. Topologically, residues 133 to 153 are cytoplasmic; the sequence is PSSLLSTCYAKDDPRLDGAFT. A helical transmembrane segment spans residues 154 to 174; it reads MYYMSVNIGSFFSMLATPWLA. Residues 175 to 178 lie on the Periplasmic side of the membrane; that stretch reads ARYG. Residues 179–199 traverse the membrane as a helical segment; sequence WSTAFALSVVGMLITVVNFAF. Topologically, residues 200–219 are cytoplasmic; it reads CQRWVKSYGSKPDFEPINFR. A helical membrane pass occupies residues 220-240; it reads NLLLTIVGIVVLIAVATWLLH. The Periplasmic segment spans residues 241 to 246; sequence NQDIAR. A helical transmembrane segment spans residues 247-267; that stretch reads MVLGVIALGIVIIFGKEAFSM. The Cytoplasmic segment spans residues 268–274; the sequence is HGAARRK. A helical membrane pass occupies residues 275–295; it reads MIVAFILMLQAIIFFVLYSQM. The Periplasmic portion of the chain corresponds to 296-320; it reads PTSLNFFAIRNVEHSILGIAFEPEQ. A helical membrane pass occupies residues 321 to 341; it reads YQALNPFWIITGSPILAAIYN. Residues 342–352 lie on the Cytoplasmic side of the membrane; that stretch reads RMGDTLPMPMK. The chain crosses the membrane as a helical span at residues 353 to 373; the sequence is FAIGMVLCSGAFLILPLGAKF. Over 374 to 383 the chain is Periplasmic; it reads ANDAGIVSVN. Residues 384–404 traverse the membrane as a helical segment; sequence WLIASYGLQSIGELMISGLGL. Residues 405-414 are Cytoplasmic-facing; it reads AMVAQLVPQR. The helical transmembrane segment at 415 to 435 threads the bilayer; sequence LMGFIMGSWFLTTAGANIIGG. At 436 to 459 the chain is on the periplasmic side; it reads YVANLMAVPSDVTDPLMSLEVYGR. Residues 460-480 traverse the membrane as a helical segment; that stretch reads VFMQIGIATAVIAVLMLLTAP. The Cytoplasmic portion of the chain corresponds to 481–501; the sequence is KLNRMTQDDDTAEKGSKAATV.

Belongs to the major facilitator superfamily. Proton-dependent oligopeptide transporter (POT/PTR) (TC 2.A.17) family. DtpA subfamily.

The protein localises to the cell inner membrane. Functionally, proton-dependent permease that transports di- and tripeptides. In Salmonella typhi, this protein is Dipeptide and tripeptide permease A.